Here is a 447-residue protein sequence, read N- to C-terminus: Argininosuccinate synthase (447 aa).

ATP is bound by residues 20 to 28 (AFSGGLDTS) and Ala46. Residue Tyr102 participates in L-citrulline binding. Positions 132 and 134 each coordinate ATP. 3 residues coordinate L-aspartate: Thr134, Asn138, and Asp139. Asn138 provides a ligand contact to L-citrulline. Asp139 contributes to the ATP binding site. Residues Arg142 and Ser195 each contribute to the L-citrulline site. Asp197 serves as a coordination point for ATP. L-citrulline is bound by residues Thr204, Glu206, and Glu283.

Belongs to the argininosuccinate synthase family. Type 2 subfamily. In terms of assembly, homotetramer.

It is found in the cytoplasm. It catalyses the reaction L-citrulline + L-aspartate + ATP = 2-(N(omega)-L-arginino)succinate + AMP + diphosphate + H(+). The protein operates within amino-acid biosynthesis; L-arginine biosynthesis; L-arginine from L-ornithine and carbamoyl phosphate: step 2/3. This Neisseria meningitidis serogroup B (strain ATCC BAA-335 / MC58) protein is Argininosuccinate synthase (argG).